A 277-amino-acid polypeptide reads, in one-letter code: Large ribosomal subunit protein uL2 (277 aa).

2 disordered regions span residues 37–59 and 221–265; these read KNSTGGRNHNGHITTRHRGGGHK and RGTA…KRTD. Residues 50 to 59 show a composition bias toward basic residues; the sequence is TTRHRGGGHK. A compositionally biased stretch (basic and acidic residues) spans 229-241; the sequence is DHPHGGGEGRTGE.

Belongs to the universal ribosomal protein uL2 family. Part of the 50S ribosomal subunit. Forms a bridge to the 30S subunit in the 70S ribosome.

Functionally, one of the primary rRNA binding proteins. Required for association of the 30S and 50S subunits to form the 70S ribosome, for tRNA binding and peptide bond formation. It has been suggested to have peptidyltransferase activity; this is somewhat controversial. Makes several contacts with the 16S rRNA in the 70S ribosome. The protein is Large ribosomal subunit protein uL2 of Chromobacterium violaceum (strain ATCC 12472 / DSM 30191 / JCM 1249 / CCUG 213 / NBRC 12614 / NCIMB 9131 / NCTC 9757 / MK).